The primary structure comprises 843 residues: MKSPSPVDPESPSSPDCKGGSSSKRRRLPWRMTMSLAYQSLGVVYGDLSTSPLYVYKAAFAEDIQHSETNEEILGVLSFVFWTLTLVPLLKYVCVVLRADDNGEGGTFALYSLLCRHARAALLPPGGGGGGGEPGDEDQFLDAGADKKAAANGNALALSGRGGGGGAAAGVRRLLERHKVLQRVLLVLALVGTCMVIGDGVLTPAISVFSAVSGLELSMEKHQHKYVEVPIACFVLVCLFCLQHYGTHRVGFLFAPIVITWLLCISMIGVYNIVHWEPNVYRALSPYYMYKFLKKTQRGGWMSLGGILLCITGSEAMFADLGHFNQLSIQIAFTCMVYPSLILAYMGQAAYLCKHHIIESDYRIGFYVSVPEKIRWPVLAIAILAAVVGSQAVITGTFSMIKQCTALGCFPRVKIVHTSDKVHGQIYIPEINWILMILCLAITIGFRDTKHLGNASGLAVITVMLVTTCLMSLVIVLCWHKSIFLAFGFIIFFGTIEALYFSASLIKFREGAWVPIVLAFIFMAIMCIWHYGTIKKYEFDLQNKVSINWLLGLSPNLGIVRVRGIGLIHTELDSGIPAIFSHFVTNLPAFHQVLIFLCIKNVPIPHVSPEERFLVGRIGPKEYRIYRCIVRYGYHDVHKDDQEFEKELVCSVAEFIRSGAAAAADAAASSKPKNVCGGGAEESEKEEEERMSVIPSGSIRMMEEDGGAGAPSSEDTVGGSGSGSGRGSSRGGGGAREIMSPSPSPPPVVVAPRKRVRFVLPAASPRPDAGVREELQELMDAREAGMAFILGHSYVKAKSGSSFFRRLVINFCYDFLRRNSRGPNYAVTIPHASTLEVGMIYYV.

The span at 1-15 (MKSPSPVDPESPSSP) shows a compositional bias: low complexity. The segment at 1–25 (MKSPSPVDPESPSSPDCKGGSSSKR) is disordered. Topologically, residues 1–34 (MKSPSPVDPESPSSPDCKGGSSSKRRRLPWRMTM) are cytoplasmic. Residues 35-55 (SLAYQSLGVVYGDLSTSPLYV) traverse the membrane as a helical segment. The Vacuolar segment spans residues 56–72 (YKAAFAEDIQHSETNEE). Residues 73–93 (ILGVLSFVFWTLTLVPLLKYV) form a helical membrane-spanning segment. Topologically, residues 94–183 (CVVLRADDNG…LLERHKVLQR (90 aa)) are cytoplasmic. The helical transmembrane segment at 184-204 (VLLVLALVGTCMVIGDGVLTP) threads the bilayer. Residues 205–225 (AISVFSAVSGLELSMEKHQHK) are Vacuolar-facing. A helical transmembrane segment spans residues 226–246 (YVEVPIACFVLVCLFCLQHYG). The Cytoplasmic portion of the chain corresponds to 247 to 249 (THR). A helical membrane pass occupies residues 250-270 (VGFLFAPIVITWLLCISMIGV). The Vacuolar segment spans residues 271–298 (YNIVHWEPNVYRALSPYYMYKFLKKTQR). Residues 299–319 (GGWMSLGGILLCITGSEAMFA) traverse the membrane as a helical segment. The Cytoplasmic segment spans residues 320–326 (DLGHFNQ). A helical transmembrane segment spans residues 327 to 347 (LSIQIAFTCMVYPSLILAYMG). Over 348–377 (QAAYLCKHHIIESDYRIGFYVSVPEKIRWP) the chain is Vacuolar. Residues 378–398 (VLAIAILAAVVGSQAVITGTF) form a helical membrane-spanning segment. The Cytoplasmic segment spans residues 399-425 (SMIKQCTALGCFPRVKIVHTSDKVHGQ). The chain crosses the membrane as a helical span at residues 426–446 (IYIPEINWILMILCLAITIGF). Residues 447 to 451 (RDTKH) lie on the Vacuolar side of the membrane. Residues 452 to 472 (LGNASGLAVITVMLVTTCLMS) form a helical membrane-spanning segment. Residues 473-482 (LVIVLCWHKS) are Cytoplasmic-facing. The helical transmembrane segment at 483 to 505 (IFLAFGFIIFFGTIEALYFSASL) threads the bilayer. The Vacuolar portion of the chain corresponds to 506-510 (IKFRE). The chain crosses the membrane as a helical span at residues 511 to 531 (GAWVPIVLAFIFMAIMCIWHY). The Cytoplasmic segment spans residues 532 to 843 (GTIKKYEFDL…TLEVGMIYYV (312 aa)). The segment at 667–747 (AASSKPKNVC…IMSPSPSPPP (81 aa)) is disordered. A compositionally biased stretch (gly residues) spans 718 to 735 (GGSGSGSGRGSSRGGGGA).

This sequence belongs to the HAK/KUP transporter (TC 2.A.72.3) family. Expressed in roots, shoots, and panicle at flowering stage.

It is found in the vacuole membrane. In terms of biological role, high-affinity potassium transporter. The chain is Potassium transporter 10 (HAK10) from Oryza sativa subsp. japonica (Rice).